The following is a 1219-amino-acid chain: N-acetylglucosamine-1-phosphotransferase subunits alpha/beta (1219 aa).

A helical membrane pass occupies residues 27-47 (LCFGGLVLMIVSAFQFGEVVV). Residues N88, N119, N153, N292, and N381 are each glycosylated (N-linked (GlcNAc...) asparagine). 4 disulfide bridges follow: C443-C466, C457-C473, C508-C531, and C522-C538. LNR repeat units follow at residues 443–478 (CAEG…GSSR) and 508–538 (CNQG…VGDC). Residue D454 participates in Ca(2+) binding. N462 is a glycosylation site (N-linked (GlcNAc...) asparagine). The Ca(2+) site is built by D469, D472, D519, D534, and D537. 8 N-linked (GlcNAc...) asparagine glycosylation sites follow: N554, N610, N617, N645, N696, N726, N823, and N974. The disordered stretch occupies residues 640–666 (ELPKSNTSTPVRDKEEEPKPTVATPEP). The DMAP1-binding domain occupies 696 to 804 (NETLLPDEVK…DDVTTKAQSR (109 aa)). The EF-hand domain maps to 970–1005 (VQQLNISEVFDEIDTDHSGVLSDREIRTLATRIHEL). Ca(2+) is bound by residues D983, D985, S987, and E994. N-linked (GlcNAc...) asparagine glycosylation is found at N1021, N1029, and N1094. The chain crosses the membrane as a helical span at residues 1180 to 1200 (VLVTLVVFTVMSFFAEQLVML).

Belongs to the stealth family. Hexamer of two alpha, two beta and two gamma (GNPTG) subunits; disulfide-linked. The alpha and/or the beta subunits of the enzyme constitute the catalytic subunits. Post-translationally, the alpha- and beta-subunits are generated by a proteolytic cleavage by mbtps1 protease at the Gln-893-Asp-894 bond.

Its subcellular location is the golgi apparatus membrane. The enzyme catalyses N(4)-[alpha-D-mannosyl-(1-&gt;2)-alpha-D-mannosyl-(glycan)]-L-asparaginyl-[protein] + UDP-N-acetyl-alpha-D-glucosamine = N(4)-[6-(N-acetyl-alpha-D-glucosaminyl-1-phospho)-alpha-D-mannosyl-(1-&gt;2)-alpha-D-mannosyl-(glycan)]-L-asparaginyl-[protein] + UMP + H(+). In terms of biological role, catalyzes the formation of mannose 6-phosphate (M6P) markers on high mannose type oligosaccharides in the Golgi apparatus. M6P residues are required to bind to the M6P receptors (MPR), which mediate the vesicular transport of lysosomal enzymes to the endosomal/prelysosomal compartment. This Danio rerio (Zebrafish) protein is N-acetylglucosamine-1-phosphotransferase subunits alpha/beta (gnptab).